A 321-amino-acid polypeptide reads, in one-letter code: Ribosomal RNA small subunit methyltransferase H (321 aa).

Residues 34–36, D54, F80, D102, and Q109 contribute to the S-adenosyl-L-methionine site; that span reads GGH.

The protein belongs to the methyltransferase superfamily. RsmH family.

It is found in the cytoplasm. It catalyses the reaction cytidine(1402) in 16S rRNA + S-adenosyl-L-methionine = N(4)-methylcytidine(1402) in 16S rRNA + S-adenosyl-L-homocysteine + H(+). Specifically methylates the N4 position of cytidine in position 1402 (C1402) of 16S rRNA. The polypeptide is Ribosomal RNA small subunit methyltransferase H (Blochmanniella floridana).